The following is a 254-amino-acid chain: Type III pantothenate kinase (254 aa).

6–13 (DVGNTNTT) contacts ATP. Residues Tyr100 and 107-110 (GADR) contribute to the substrate site. Asp109 (proton acceptor) is an active-site residue. A K(+)-binding site is contributed by Asp129. Residue Thr132 coordinates ATP. Thr184 contributes to the substrate binding site.

Belongs to the type III pantothenate kinase family. In terms of assembly, homodimer. Requires NH4(+) as cofactor. K(+) serves as cofactor.

It localises to the cytoplasm. It catalyses the reaction (R)-pantothenate + ATP = (R)-4'-phosphopantothenate + ADP + H(+). Its pathway is cofactor biosynthesis; coenzyme A biosynthesis; CoA from (R)-pantothenate: step 1/5. Its function is as follows. Catalyzes the phosphorylation of pantothenate (Pan), the first step in CoA biosynthesis. The protein is Type III pantothenate kinase of Anaeromyxobacter dehalogenans (strain 2CP-C).